Here is a 431-residue protein sequence, read N- to C-terminus: Helix-loop-helix protein 11 (431 aa).

The disordered stretch occupies residues 88–109 (LANRSLSQPAPLSPTSLDPDRR). The segment covering 91–103 (RSLSQPAPLSPTS) has biased composition (polar residues). Residues 112–163 (MRRQIANCNERRRMQSINAGFLALRALLPRKEGEKLSKAAILQQTADMVHQL) enclose the bHLH domain. 2 stretches are compositionally biased toward polar residues: residues 226 to 241 (TTTS…PRSN) and 248 to 257 (LPSSYASSAL). The tract at residues 226–311 (TTTSSQASSP…PPPTLPSLET (86 aa)) is disordered. Low complexity predominate over residues 274–291 (TTSTPLSLLTLNGSPTSS).

As to expression, expressed in the pharynx, nerve cords, the H-shaped excretory cell, vulva muscles, and the anal depressor (at protein level). Expressed in the intestine (at protein level). In males, it is also expressed in the spicules and hyp7 cells of the hypodermis (at protein level).

The protein resides in the nucleus. Functionally, transcriptional regulator. Component of a feedback loop involving atfs-1, atgl-1 and hlh-11. Binds to the promoter of the atgl-1 lipase to negatively regulate the expression of atgl-1, and thereby promoting fat oxidation in response to mitochondrial stress and mitochondrial respiration in the intestine. In addition, functions with atfs-1 to maintain lifespan. May have a role in fertility and in positively regulating body size. The protein is Helix-loop-helix protein 11 of Caenorhabditis elegans.